Reading from the N-terminus, the 166-residue chain is Phosphopantetheine adenylyltransferase (166 aa).

Thr-9 provides a ligand contact to substrate. ATP is bound by residues 9–10 (TF) and His-17. Residues Lys-41, Leu-78, and Arg-92 each contribute to the substrate site. Residues 93 to 95 (GLR), Glu-103, and 128 to 134 (HQAIASK) contribute to the ATP site.

It belongs to the bacterial CoaD family. In terms of assembly, homohexamer. Mg(2+) serves as cofactor.

It is found in the cytoplasm. The enzyme catalyses (R)-4'-phosphopantetheine + ATP + H(+) = 3'-dephospho-CoA + diphosphate. The protein operates within cofactor biosynthesis; coenzyme A biosynthesis; CoA from (R)-pantothenate: step 4/5. Reversibly transfers an adenylyl group from ATP to 4'-phosphopantetheine, yielding dephospho-CoA (dPCoA) and pyrophosphate. The protein is Phosphopantetheine adenylyltransferase of Roseobacter denitrificans (strain ATCC 33942 / OCh 114) (Erythrobacter sp. (strain OCh 114)).